The following is a 403-amino-acid chain: Tyrosine--tRNA ligase (403 aa).

Residues 46–55 (PTAPDLHLGH) carry the 'HIGH' region motif. Residues 230-234 (KMSKS) carry the 'KMSKS' region motif. Lysine 233 serves as a coordination point for ATP. An S4 RNA-binding domain is found at 342–402 (LFITQILNQA…GKKAYAKVTV (61 aa)).

It belongs to the class-I aminoacyl-tRNA synthetase family. TyrS type 2 subfamily. As to quaternary structure, homodimer.

The protein localises to the cytoplasm. It carries out the reaction tRNA(Tyr) + L-tyrosine + ATP = L-tyrosyl-tRNA(Tyr) + AMP + diphosphate + H(+). Its function is as follows. Catalyzes the attachment of tyrosine to tRNA(Tyr) in a two-step reaction: tyrosine is first activated by ATP to form Tyr-AMP and then transferred to the acceptor end of tRNA(Tyr). This chain is Tyrosine--tRNA ligase, found in Psychrobacter arcticus (strain DSM 17307 / VKM B-2377 / 273-4).